A 490-amino-acid polypeptide reads, in one-letter code: Nuclear distribution protein PAC1 (490 aa).

A coiled-coil region spans residues 65–96; the sequence is STVLRLQKKIIDLENEIHNLTNIINTTNSETN. WD repeat units lie at residues 118–157, 163–204, 205–245, 251–290, 293–327, 328–367, 388–427, and 436–487; these read QCEN…NTIP, AHTR…RTLN, GHEH…CLKS, EWCR…GVAM, GHTH…FPSI, PSEL…LIPH, GHSS…ETGS, and GHEG…NSIK.

This sequence belongs to the WD repeat LIS1/nudF family. Self-associates. Interacts with NDL1 and dynein.

Its subcellular location is the cytoplasm. It is found in the cytoskeleton. It localises to the spindle pole. In terms of biological role, positively regulates the activity of the minus-end directed microtubule motor protein dynein. Plays a central role in positioning the mitotic spindle at the bud neck during cell division. Targets cytoplasmic dynein to microtubule plus ends, thereby promoting dynein-mediated microtubule sliding along the bud cortex and consequently the movement of the mitotic spindle to the bud neck. The sequence is that of Nuclear distribution protein PAC1 from Candida tropicalis (strain ATCC MYA-3404 / T1) (Yeast).